The following is a 191-amino-acid chain: Ribonuclease M5 (191 aa).

The Toprim domain occupies 8-91 (HEFIVVEGRD…AFINRQDALP (84 aa)). The Mg(2+) site is built by Glu-14, Asp-60, and Asp-62.

This sequence belongs to the ribonuclease M5 family. Requires Mg(2+) as cofactor.

Its subcellular location is the cytoplasm. The enzyme catalyses Endonucleolytic cleavage of RNA, removing 21 and 42 nucleotides, respectively, from the 5'- and 3'-termini of a 5S-rRNA precursor.. Functionally, required for correct processing of both the 5' and 3' ends of 5S rRNA precursor. Cleaves both sides of a double-stranded region yielding mature 5S rRNA in one step. The sequence is that of Ribonuclease M5 from Listeria monocytogenes serovar 1/2a (strain ATCC BAA-679 / EGD-e).